The following is a 200-amino-acid chain: Small ribosomal subunit protein uS4 (200 aa).

One can recognise an S4 RNA-binding domain in the interval 92-155; that stretch reads SRLDAVVYSL…QKLNIIVESV (64 aa).

It belongs to the universal ribosomal protein uS4 family. Part of the 30S ribosomal subunit. Contacts protein S5. The interaction surface between S4 and S5 is involved in control of translational fidelity.

Its function is as follows. One of the primary rRNA binding proteins, it binds directly to 16S rRNA where it nucleates assembly of the body of the 30S subunit. In terms of biological role, with S5 and S12 plays an important role in translational accuracy. The chain is Small ribosomal subunit protein uS4 from Staphylococcus aureus (strain JH9).